Here is a 477-residue protein sequence, read N- to C-terminus: Glutamyl-tRNA reductase (477 aa).

Residues 49 to 52 (TCNR), S109, 114 to 116 (EGQ), and Q120 each bind substrate. C50 (nucleophile) is an active-site residue. Position 221–226 (221–226 (GAGSMS)) interacts with NADP(+).

It belongs to the glutamyl-tRNA reductase family. Homodimer.

It catalyses the reaction (S)-4-amino-5-oxopentanoate + tRNA(Glu) + NADP(+) = L-glutamyl-tRNA(Glu) + NADPH + H(+). It participates in porphyrin-containing compound metabolism; protoporphyrin-IX biosynthesis; 5-aminolevulinate from L-glutamyl-tRNA(Glu): step 1/2. Catalyzes the NADPH-dependent reduction of glutamyl-tRNA(Glu) to glutamate 1-semialdehyde (GSA). In Thermobifida fusca (strain YX), this protein is Glutamyl-tRNA reductase.